The sequence spans 521 residues: Vang-like protein 2 (521 aa).

The interval 1-81 (MDTESQYSGY…TTVVTGTSEH (81 aa)) is disordered. Residues 1-108 (MDTESQYSGY…VPLDCSRHLG (108 aa)) lie on the Cytoplasmic side of the membrane. Residues 15 to 33 (GHSRSSRKHRDRRDRHRSK) are compositionally biased toward basic residues. A compositionally biased stretch (basic and acidic residues) spans 57–67 (ESTRGDERDDN). Low complexity predominate over residues 69–81 (GETTTVVTGTSEH). A helical transmembrane segment spans residues 109-129 (VAAGAILALLSFLTPLAFLLL). The Extracellular segment spans residues 130-147 (PPLLWREELEPCGTACEG). A helical transmembrane segment spans residues 148-168 (LFISVAFKLLILLLGSWALFF). Residues 169-178 (RRPKASLPRV) lie on the Cytoplasmic side of the membrane. The helical transmembrane segment at 179-199 (FVLRALLMVLVFLLVISYWLF) threads the bilayer. At 200–217 (YGVRILDARERSYQGVVQ) the chain is on the extracellular side. The chain crosses the membrane as a helical span at residues 218 to 238 (FAVSLVDALLFVHYLAVVLLE). At 239–521 (LRQLQPQFTL…VMRLQSETSV (283 aa)) the chain is on the cytoplasmic side.

This sequence belongs to the Vang family. In terms of assembly, homodimer and heterodimer with Vangl1. Interacts through its C-terminal region with the N-terminal half of DVL1, DVL2 and DVL3. The PDZ domain of DVL1, DVL2 and DVL3 is required for the interaction. Variants Glu-255 and Asn-464 impair interaction with the DVL proteins. Also interacts with the PDZ domains of MAGI3, SCRIB/SCRB1 and FZD3. Interacts with PRICKLE3. Primarily expressed in the brain and epididymis. Not detected in the cochlea of Lp mice.

It localises to the cell membrane. In terms of biological role, involved in the control of early morphogenesis and patterning of both axial midline structures and the development of neural plate. Plays a role in the regulation of planar cell polarity, particularly in the orientation of stereociliary bundles in the cochlea. Required for polarization and movement of myocardializing cells in the outflow tract and seems to act via RHOA signaling to regulate this process. Required for cell surface localization of FZD3 and FZD6 in the inner ear. This Mus musculus (Mouse) protein is Vang-like protein 2 (Vangl2).